The primary structure comprises 369 residues: MQTKLFYFFVLLSFIPGFFLVQQEQFVALSIWIILITLFSLWYDWKFCLLNLTIVGFFIAFCYFVPAVKINQIVKNNFIRTPFINWIDQTTKGELNQYLKLFLINETTKNNLYQNALKLNIVHLFVISGFHLSFLFNLMERFLWKRWYLNKLSGFAVLLIYLFLVGFAFSALRVFISTLLKQVFKKQLPEDNLSLTALLIILISNHALNNFGFNFSFLACFVLLFVNKLKLLKALKPLVSSSLILIVISPLSLYLNSRLNAFSVLFNLLFSPIALFYFCVSWIILPFIGVFGQASFGIYLPLKMLSEWSLKVTVFLQIPKPNLIFFFVYYGLLGLLYTIFTVAYYDNNLWSRYWANSPKIKSNQKQFSI.

9 helical membrane-spanning segments follow: residues 25-45 (QFVA…WYDW), 47-67 (FCLL…FVPA), 119-139 (LNIV…FNLM), 152-172 (LSGF…FSAL), 206-226 (HALN…LLFV), 235-255 (LKPL…SLYL), 272-292 (PIAL…GVFG), 296-316 (FGIY…TVFL), and 323-343 (LIFF…FTVA).

To B.subtilis ComEC.

The protein localises to the cell membrane. This is an uncharacterized protein from Mycoplasma genitalium (strain ATCC 33530 / DSM 19775 / NCTC 10195 / G37) (Mycoplasmoides genitalium).